A 304-amino-acid polypeptide reads, in one-letter code: N-acetylglucosaminyl-phosphatidylinositol de-N-acetylase (304 aa).

At 1–20 (MKMLRRTKVNFSKLLYKITK) the chain is on the lumenal side. A helical transmembrane segment spans residues 21-38 (LAIVLTILYIYFTPKIVS). The Cytoplasmic portion of the chain corresponds to 39–304 (RNNASLQHIF…FVNEFDVYTY (266 aa)).

The protein belongs to the PIGL family.

It is found in the endoplasmic reticulum membrane. The enzyme catalyses a 6-(N-acetyl-alpha-D-glucosaminyl)-1-(1,2-diacyl-sn-glycero-3-phospho)-1D-myo-inositol + H2O = a 6-(alpha-D-glucosaminyl)-1-(1,2-diacyl-sn-glycero-3-phospho)-1D-myo-inositol + acetate. Its pathway is glycolipid biosynthesis; glycosylphosphatidylinositol-anchor biosynthesis. Its function is as follows. Involved in the second step of GPI biosynthesis. De-N-acetylation of N-acetylglucosaminyl-phosphatidylinositol. This chain is N-acetylglucosaminyl-phosphatidylinositol de-N-acetylase (GPI12), found in Saccharomyces cerevisiae (strain ATCC 204508 / S288c) (Baker's yeast).